Here is a 79-residue protein sequence, read N- to C-terminus: Small ribosomal subunit protein bS16 (79 aa).

Belongs to the bacterial ribosomal protein bS16 family.

The chain is Small ribosomal subunit protein bS16 from Solidesulfovibrio magneticus (strain ATCC 700980 / DSM 13731 / RS-1) (Desulfovibrio magneticus).